Here is a 212-residue protein sequence, read N- to C-terminus: ER lumen protein-retaining receptor 1 (212 aa).

The Lumenal portion of the chain corresponds to 1–4 (MNLF). A helical transmembrane segment spans residues 5–24 (RFLGDLSHLLAIILLLLKIW). Over 25-32 (KSRSCAGI) the chain is Cytoplasmic. Residues 33 to 52 (SGKSQVLFAVVFTARYLDLF) traverse the membrane as a helical segment. Positions 47-48 (RY) are interaction with the K-D-E-L motif on target proteins. Over 53-58 (TNYISL) the chain is Lumenal. The chain crosses the membrane as a helical span at residues 59–79 (YNTCMKVVYIACSFTTVWLIY). Over 80-92 (SKFKATYDGNHDT) the chain is Cytoplasmic. The chain crosses the membrane as a helical span at residues 93-110 (FRVEFLVVPTAILAFLVN). Over 111 to 116 (HDFTPL) the chain is Lumenal. A helical transmembrane segment spans residues 117–135 (EILWTFSIYLESVAILPQL). Residues 136 to 149 (FMVSKTGEAETITS) are Cytoplasmic-facing. Residues 150 to 168 (HYLFALGVYRTLYLFNWIW) form a helical membrane-spanning segment. The segment at 159–169 (RTLYLFNWIWR) is interaction with the K-D-E-L motif on target proteins. Residues 169-178 (RYHFEGFFDL) are Lumenal-facing. The chain crosses the membrane as a helical span at residues 179–199 (IAIVAGLVQTVLYCDFFYLYI). The Cytoplasmic portion of the chain corresponds to 200 to 212 (TKVLKGKKLSLPA). Residues 204–207 (KGKK) form an important for recycling of cargo proteins with the sequence motif K-D-E-L from the Golgi to the endoplasmic reticulum region. Residue serine 209 is modified to Phosphoserine; by PKA.

Belongs to the ERD2 family. As to quaternary structure, upon ligand binding the receptor oligomerizes and interacts with components of the transport machinery such as ARFGAP1 and ARF1. In terms of processing, phosphorylation by PKA at Ser-209 is required for endoplasmic reticulum retention function.

The protein localises to the golgi apparatus membrane. It is found in the cytoplasmic vesicle. The protein resides in the COPI-coated vesicle membrane. It localises to the endoplasmic reticulum membrane. Its subcellular location is the endoplasmic reticulum-Golgi intermediate compartment membrane. Receptor for the C-terminal sequence motif K-D-E-L that is present on endoplasmic reticulum resident proteins and that mediates their recycling from the Golgi back to the endoplasmic reticulum. This is ER lumen protein-retaining receptor 1 (KDELR1) from Homo sapiens (Human).